The chain runs to 226 residues: ATP synthase F(0) complex subunit a (226 aa).

6 consecutive transmembrane segments (helical) span residues 6–26 (FAPF…IITF), 68–88 (WTLM…LGLL), 97–117 (QLSM…IMGF), 138–158 (IPML…ALAV), 164–184 (ITAG…LSSI), and 195–215 (ILFL…YVFT).

Belongs to the ATPase A chain family. As to quaternary structure, component of the ATP synthase complex composed at least of ATP5F1A/subunit alpha, ATP5F1B/subunit beta, ATP5MC1/subunit c (homooctomer), MT-ATP6/subunit a, MT-ATP8/subunit 8, ATP5ME/subunit e, ATP5MF/subunit f, ATP5MG/subunit g, ATP5MK/subunit k, ATP5MJ/subunit j, ATP5F1C/subunit gamma, ATP5F1D/subunit delta, ATP5F1E/subunit epsilon, ATP5PF/subunit F6, ATP5PB/subunit b, ATP5PD/subunit d, ATP5PO/subunit OSCP. ATP synthase complex consists of a soluble F(1) head domain (subunits alpha(3) and beta(3)) - the catalytic core - and a membrane F(0) domain - the membrane proton channel (subunits c, a, 8, e, f, g, k and j). These two domains are linked by a central stalk (subunits gamma, delta, and epsilon) rotating inside the F1 region and a stationary peripheral stalk (subunits F6, b, d, and OSCP). Interacts with DNAJC30; interaction is direct.

The protein localises to the mitochondrion inner membrane. The catalysed reaction is H(+)(in) = H(+)(out). Subunit a, of the mitochondrial membrane ATP synthase complex (F(1)F(0) ATP synthase or Complex V) that produces ATP from ADP in the presence of a proton gradient across the membrane which is generated by electron transport complexes of the respiratory chain. ATP synthase complex consist of a soluble F(1) head domain - the catalytic core - and a membrane F(1) domain - the membrane proton channel. These two domains are linked by a central stalk rotating inside the F(1) region and a stationary peripheral stalk. During catalysis, ATP synthesis in the catalytic domain of F(1) is coupled via a rotary mechanism of the central stalk subunits to proton translocation. With the subunit c (ATP5MC1), forms the proton-conducting channel in the F(0) domain, that contains two crucial half-channels (inlet and outlet) that facilitate proton movement from the mitochondrial intermembrane space (IMS) into the matrix. Protons are taken up via the inlet half-channel and released through the outlet half-channel, following a Grotthuss mechanism. The protein is ATP synthase F(0) complex subunit a of Didelphis virginiana (North American opossum).